The chain runs to 191 residues: NADH-quinone oxidoreductase subunit B (191 aa).

4 residues coordinate [4Fe-4S] cluster: Cys-70, Cys-71, Cys-135, and Cys-165.

The protein belongs to the complex I 20 kDa subunit family. As to quaternary structure, NDH-1 is composed of 14 different subunits. Subunits NuoB, C, D, E, F, and G constitute the peripheral sector of the complex. [4Fe-4S] cluster serves as cofactor.

The protein localises to the cell inner membrane. The enzyme catalyses a quinone + NADH + 5 H(+)(in) = a quinol + NAD(+) + 4 H(+)(out). Functionally, NDH-1 shuttles electrons from NADH, via FMN and iron-sulfur (Fe-S) centers, to quinones in the respiratory chain. The immediate electron acceptor for the enzyme in this species is believed to be ubiquinone. Couples the redox reaction to proton translocation (for every two electrons transferred, four hydrogen ions are translocated across the cytoplasmic membrane), and thus conserves the redox energy in a proton gradient. The protein is NADH-quinone oxidoreductase subunit B of Parvibaculum lavamentivorans (strain DS-1 / DSM 13023 / NCIMB 13966).